The sequence spans 222 residues: UPF0441 protein CKO_04429 (222 aa).

Over residues 177-194 (TVPKTAMAPKPATTTTVT) the composition is skewed to low complexity. Residues 177-222 (TVPKTAMAPKPATTTTVTRGGFGESVAKQSTMQRSATGTSNRSMGG) are disordered. Positions 203–222 (AKQSTMQRSATGTSNRSMGG) are enriched in polar residues.

The protein belongs to the UPF0441 family.

The sequence is that of UPF0441 protein CKO_04429 from Citrobacter koseri (strain ATCC BAA-895 / CDC 4225-83 / SGSC4696).